The primary structure comprises 469 residues: 3-isopropylmalate dehydratase large subunit (469 aa).

Cys-350, Cys-410, and Cys-413 together coordinate [4Fe-4S] cluster.

The protein belongs to the aconitase/IPM isomerase family. LeuC type 1 subfamily. In terms of assembly, heterodimer of LeuC and LeuD. It depends on [4Fe-4S] cluster as a cofactor.

The enzyme catalyses (2R,3S)-3-isopropylmalate = (2S)-2-isopropylmalate. The protein operates within amino-acid biosynthesis; L-leucine biosynthesis; L-leucine from 3-methyl-2-oxobutanoate: step 2/4. Its function is as follows. Catalyzes the isomerization between 2-isopropylmalate and 3-isopropylmalate, via the formation of 2-isopropylmaleate. The chain is 3-isopropylmalate dehydratase large subunit from Mesorhizobium japonicum (strain LMG 29417 / CECT 9101 / MAFF 303099) (Mesorhizobium loti (strain MAFF 303099)).